A 316-amino-acid polypeptide reads, in one-letter code: Cytochrome c biogenesis protein CcsA (316 aa).

Helical transmembrane passes span 9 to 29 (IFVN…LINL), 39 to 61 (FSKN…RYLQ), 70 to 90 (LYES…ILEV), 94 to 114 (IGLS…FATL), 143 to 163 (LISY…LSLF), 224 to 244 (TISL…VWAN), 257 to 271 (ETWA…AIYL), and 289 to 309 (SMGF…GVGL).

This sequence belongs to the CcmF/CycK/Ccl1/NrfE/CcsA family. May interact with Ccs1.

The protein localises to the plastid. Its subcellular location is the chloroplast thylakoid membrane. Functionally, required during biogenesis of c-type cytochromes (cytochrome c6 and cytochrome f) at the step of heme attachment. This chain is Cytochrome c biogenesis protein CcsA, found in Adiantum capillus-veneris (Maidenhair fern).